The following is a 274-amino-acid chain: Proliferating cell nuclear antigen 1 (274 aa).

Residues Arg-61–Lys-80 mediate DNA binding.

This sequence belongs to the PCNA family. Homotrimer. Interacts with ORC1 (via PIP-box motif); the interaction occurs during DNA replication in trophozoites. Interacts with ORC5; the interaction occurs during the trophozoite stage but not at the late schizont stage. Interacts with FEN1.

Its subcellular location is the nucleus. The protein localises to the chromosome. It localises to the cytoplasm. Auxiliary protein of DNA polymerase delta and is involved in the control of DNA replication by increasing the polymerase processibility during elongation of the leading strand. Involved in DNA damage response. The sequence is that of Proliferating cell nuclear antigen 1 from Plasmodium falciparum (isolate 3D7).